A 541-amino-acid chain; its full sequence is 1'-carboxy-chondrochloren decarboxylase (541 aa).

One can recognise an FAD-binding PCMH-type domain in the interval 39-226 (TTHRIPAIIS…TRMTIWLAPR (188 aa)).

The catalysed reaction is 1'-carboxy-chondrochloren A + FAD + 2 H(+) = chondrochloren A + FADH2 + CO2. The enzyme catalyses 1'-carboxy-chondrochloren B + FAD + 2 H(+) = chondrochloren B + FADH2 + CO2. It participates in antibiotic biosynthesis. Its activity is regulated as follows. Activity is not affected by the addition of EDTA or/and EGTA chelators or in the presence of external metals like Zn(2+), Mg(2+), Mn(2+) and Fe(2+). Activity is inhibited under low oxygen conditions. Oxidative decarboxylase involved in the biosynthesis of the antibiotics chondrochloren A and chondrochloren B. Catalyzes the decarboxylation of biologically inactive pre-chondrochloren A and pre-chondrochloren B to yield mature chondrochloren A and chondrochloren B, respectively. Cannot decarboxylate free L-tyrosine, 3-chloro-tyrosine or a number of chlorinated and non-chlorinated analog substrates containing variable N-acyl chains. In Chondromyces crocatus, this protein is 1'-carboxy-chondrochloren decarboxylase.